Here is a 143-residue protein sequence, read N- to C-terminus: Large ribosomal subunit protein uL11 (143 aa).

It belongs to the universal ribosomal protein uL11 family. Part of the ribosomal stalk of the 50S ribosomal subunit. Interacts with L10 and the large rRNA to form the base of the stalk. L10 forms an elongated spine to which L12 dimers bind in a sequential fashion forming a multimeric L10(L12)X complex. One or more lysine residues are methylated.

Forms part of the ribosomal stalk which helps the ribosome interact with GTP-bound translation factors. This chain is Large ribosomal subunit protein uL11, found in Laribacter hongkongensis (strain HLHK9).